The following is a 757-amino-acid chain: Transmembrane channel-like protein 1 (757 aa).

The disordered stretch occupies residues 1–74; it reads MLQIQVEEKE…RRRLRRGAEE (74 aa). Residues 1-176 lie on the Cytoplasmic side of the membrane; that stretch reads MLQIQVEEKE…KIKAIESQFG (176 aa). A compositionally biased stretch (acidic residues) spans 8-23; it reads EKEEDTEESSSEEEED. Position 30 is a phosphoserine (S30). T38 carries the post-translational modification Phosphothreonine. The span at 43-54 shows a compositional bias: acidic residues; the sequence is NEDDPEPEPEDE. The required for interaction with CIB2 stretch occupies residues 81 to 130; sequence EELERLKALLDENRQMIATVKCKPWKMEKKIEVLKEAKKFVSENEGALGK. S122 carries the post-translational modification Phosphoserine. A helical membrane pass occupies residues 177 to 214; the sequence is SSVASYFLFLRWMYGVNMVLFVLTFSLIMLPEYLWGLP. The Extracellular segment spans residues 215-265; that stretch reads YGSLPRKTVPRAEEASAANFGVLYDFNGLAQYSVLFYGYYDNKRTIGWLNF. The chain crosses the membrane as a helical span at residues 266–297; it reads RLPLSYFLVGIMCIGYSFLVVLKAMTKNIGDD. A required for interaction with CIB2 region spans residues 298 to 352; it reads GGGDDNTFNFSWKVFCSWDYLIGNPETADNKFNSITMNFKEAIIEERAAQVEENI. Residues 298–353 are Cytoplasmic-facing; the sequence is GGGDDNTFNFSWKVFCSWDYLIGNPETADNKFNSITMNFKEAIIEERAAQVEENIH. S308 is modified (phosphoserine). The helical transmembrane segment at 354–384 threads the bilayer; that stretch reads LIRFLRFLANFFVFLTLGASGYLIFWAVKRS. Over 385–396 the chain is Extracellular; sequence QEFAQQDPDTLG. Position 394 is a phosphothreonine (T394). A helical transmembrane segment spans residues 397 to 424; it reads WWEKNEMNMVMSLLGMFCPTLFDLFAEL. Over 425–428 the chain is Cytoplasmic; the sequence is EDYH. Residues 429 to 463 traverse the membrane as a helical segment; the sequence is PLIALKWLLGRIFALLLGNLYVFILALMDEINNKI. Over 464–512 the chain is Extracellular; it reads EEEKLVKANITLWEANMIKAYNESLSGLSGNTTGAPFFVHPADVPRGPC. The chain crosses the membrane as a helical span at residues 513-550; it reads WETMVGQEFVRLTVSDVLTTYVTILIGDFLRACFVRFC. Topologically, residues 551-569 are cytoplasmic; it reads NYCWCWDLEYGYPSYTEFD. Residues 570–590 traverse the membrane as a helical segment; the sequence is ISGNVLALIFNQGMIWMGSFF. The Extracellular portion of the chain corresponds to 591 to 593; that stretch reads APS. A helical transmembrane segment spans residues 594–616; sequence LPGINILRLHTSMYFQCWAVMCC. At 617-630 the chain is on the cytoplasmic side; the sequence is NVPEARVFKASRSN. A helical membrane pass occupies residues 631–654; that stretch reads NFYLGMLLLILFLSTMPVLYMIVS. The Extracellular portion of the chain corresponds to 655–697; the sequence is LPPSFDCGPFSGKNRMFEVIGETLEHDFPSWMAKILRQLSNPG. The helical transmembrane segment at 698-731 threads the bilayer; the sequence is LVIAVILVMVLTIYYLNATAKGQKAANLDLKKKM. Topologically, residues 732–757 are cytoplasmic; the sequence is KQQALENKMRNKKMAAARAAAAAGGQ.

It belongs to the TMC family. In terms of assembly, forms the MET channel composed of TMC dimer (TMC1 or TMC2), TMIE, TOMT, CIB (CIB2 or CIB3), LHFPL5 and PCDH15. Interacts with PIEZO1 and PIEZO2; the interaction may be part of the MET complex. The interaction of TMC1 and TMC2 with TOMT is required for the transportation of TMC1/2 into the stereocilia of hair cells. Interacts (via N-terminus) with both isoforms CD1 and CD3 of PCDH15. Can form a heterodimer with TMC2, TMC5 or TMC7. In terms of tissue distribution, detected in cochlear inner and outer hair cells and in neurosensory epithelia of the vestibular end organs. Also expressed in cortex, cerebellum, eye, colon, ovary and testis.

The protein localises to the cell membrane. The catalysed reaction is Ca(2+)(in) = Ca(2+)(out). Its function is as follows. Pore-forming subunit of the mechanotransducer (MET) non-selective cation channel complex located at the tips of stereocilia of cochlear hair cells and that mediates sensory transduction in the auditory system. The MET complex is composed of two dimeric pore-forming ion-conducting transmembrane TMC (TMC1 or TMC2) subunits, several auxiliary proteins including LHFPL5, TMIE, CIB2/3 and TOMT, the tip-link PCDH15, and possibly the PIEZO subunits. MET channel is activated by tension in the tip-link extending from the side wall of one stereocilium to the tip of the adjacent shorter stereocilium, where the channel is located. TMC1 MET channel is highly permeable to calcium and likely transports monovalent cations. Also involved in vestibular hair cells transduction current. This is Transmembrane channel-like protein 1 from Mus musculus (Mouse).